The following is a 221-amino-acid chain: Lectin L6 (221 aa).

Repeat copies occupy residues 1-38 (VQWH…PCYD), 39-75 (GQWT…VDGS), 76-113 (GSWV…KPCN), 114-150 (GAWT…VDGS), 151-188 (GSWQ…KPCS), and 189-221 (GQWS…YRSG). The interval 1 to 221 (VQWHQIPGKL…NSVDNIYRSG (221 aa)) is 6 X approximate tandem repeats. Residues Cys-32 and Cys-36 are joined by a disulfide bond. A disulfide bridge links Cys-108 with Cys-112. Cys-183 and Cys-187 are disulfide-bonded.

The protein belongs to the tectonin family. Hemocytes.

The protein localises to the cytoplasmic vesicle. It localises to the secretory vesicle. In terms of biological role, lipopolysaccharide-binding protein with Gram-negative antibacterial activity. Binds zinc and calcium. In Tachypleus tridentatus (Japanese horseshoe crab), this protein is Lectin L6.